The primary structure comprises 82 residues: Small ribosomal subunit protein uS17 (82 aa).

Belongs to the universal ribosomal protein uS17 family. As to quaternary structure, part of the 30S ribosomal subunit.

In terms of biological role, one of the primary rRNA binding proteins, it binds specifically to the 5'-end of 16S ribosomal RNA. The polypeptide is Small ribosomal subunit protein uS17 (Sulfurimonas denitrificans (strain ATCC 33889 / DSM 1251) (Thiomicrospira denitrificans (strain ATCC 33889 / DSM 1251))).